The following is a 119-amino-acid chain: uncharacterized protein (119 aa).

The protein to Synechocystis PCC 6803 slr0903.

This is an uncharacterized protein from Methanocaldococcus jannaschii (strain ATCC 43067 / DSM 2661 / JAL-1 / JCM 10045 / NBRC 100440) (Methanococcus jannaschii).